The primary structure comprises 225 residues: Ribosomal RNA small subunit methyltransferase G (225 aa).

Residues Gly71, Leu76, 121 to 122, and Arg139 each bind S-adenosyl-L-methionine; that span reads AE. The segment at 204–225 is disordered; the sequence is VVEARRATPSNGRGRPGRSSRR.

The protein belongs to the methyltransferase superfamily. RNA methyltransferase RsmG family.

It localises to the cytoplasm. Functionally, specifically methylates the N7 position of guanine in position 518 of 16S rRNA. The sequence is that of Ribosomal RNA small subunit methyltransferase G from Mycobacterium sp. (strain KMS).